The primary structure comprises 198 residues: Proteasome subunit beta 1 (198 aa).

A propeptide spans 1–8 (MSMYMPGA) (removed in mature form; by autocatalysis). The active-site Nucleophile is threonine 9.

The protein belongs to the peptidase T1B family. In terms of assembly, the 20S proteasome core is composed of 14 alpha and 14 beta subunits that assemble into four stacked heptameric rings, resulting in a barrel-shaped structure. The two inner rings, each composed of seven catalytic beta subunits, are sandwiched by two outer rings, each composed of seven alpha subunits. The catalytic chamber with the active sites is on the inside of the barrel. Has a gated structure, the ends of the cylinder being occluded by the N-termini of the alpha-subunits. Is capped at one or both ends by the proteasome regulatory ATPase, PAN.

The protein localises to the cytoplasm. The enzyme catalyses Cleavage of peptide bonds with very broad specificity.. With respect to regulation, the formation of the proteasomal ATPase PAN-20S proteasome complex, via the docking of the C-termini of PAN into the intersubunit pockets in the alpha-rings, triggers opening of the gate for substrate entry. Interconversion between the open-gate and close-gate conformations leads to a dynamic regulation of the 20S proteasome proteolysis activity. Its function is as follows. Component of the proteasome core, a large protease complex with broad specificity involved in protein degradation. The sequence is that of Proteasome subunit beta 1 from Nitrosopumilus maritimus (strain SCM1).